Consider the following 364-residue polypeptide: Palmitoyltransferase ZDHHC9 (364 aa).

Over 1-35 the chain is Cytoplasmic; it reads MSVMVVRKKVTRKWEKLPGRNTFCCDGRVMMARQK. The helical transmembrane segment at 36 to 56 threads the bilayer; sequence GIFYLTLFLILGTCTLFFAFE. At 57-63 the chain is on the lumenal side; sequence CRYLAVQ. Residues 64–84 form a helical membrane-spanning segment; that stretch reads QSPAIPVFAAMLFLFSMATLL. Over 85 to 183 the chain is Cytoplasmic; that stretch reads RASFSDPGVI…NCVGKRNYRY (99 aa). The DHHC domain maps to 139–189; that stretch reads KYCYTCKIFRPPRASHCSICDNCVERFDHHCPWVGNCVGKRNYRYFYLFIL. C169 functions as the S-palmitoyl cysteine intermediate in the catalytic mechanism. A helical membrane pass occupies residues 184 to 204; the sequence is FYLFILSLSLLTIYVFAFNIV. Residues 205-228 are Lumenal-facing; the sequence is YVALKSLKIGFLETLKETPGTVLE. The chain crosses the membrane as a helical span at residues 229–249; the sequence is VLICFFTLWSVVGLTGFHTFL. Over 250–364 the chain is Cytoplasmic; the sequence is VALNQTTNED…PPQEAAEAEK (115 aa). A disordered region spans residues 303-364; that stretch reads PLEESGSRPP…PPQEAAEAEK (62 aa). Residues 310–323 are compositionally biased toward polar residues; the sequence is RPPSTQETSSSLLP. Positions 346-356 are enriched in pro residues; the sequence is EMPPPEPPEPP.

It belongs to the DHHC palmitoyltransferase family. ERF2/ZDHHC9 subfamily. Interacts with GOLGA7.

The protein resides in the endoplasmic reticulum membrane. The protein localises to the golgi apparatus membrane. The catalysed reaction is L-cysteinyl-[protein] + hexadecanoyl-CoA = S-hexadecanoyl-L-cysteinyl-[protein] + CoA. Its function is as follows. Palmitoyltransferase that catalyzes the addition of palmitate onto various protein substrates, such as ADRB2, GSDMD, HRAS, NRAS and CGAS. The ZDHHC9-GOLGA7 complex is a palmitoyltransferase specific for HRAS and NRAS. May have a palmitoyltransferase activity toward the beta-2 adrenergic receptor/ADRB2 and therefore regulate G protein-coupled receptor signaling. Acts as a regulator of innate immunity by catalyzing palmitoylation of CGAS, thereby promoting CGAS homodimerization and cyclic GMP-AMP synthase activity. Activates pyroptosis by catalyzing palmitoylation of gasdermin-D (GSDMD), thereby promoting membrane translocation and pore formation of GSDMD. This Pongo abelii (Sumatran orangutan) protein is Palmitoyltransferase ZDHHC9 (ZDHHC9).